Consider the following 179-residue polypeptide: Large ribosomal subunit protein uL5 (179 aa).

Belongs to the universal ribosomal protein uL5 family. As to quaternary structure, part of the 50S ribosomal subunit; part of the 5S rRNA/L5/L18/L25 subcomplex. Contacts the 5S rRNA and the P site tRNA. Forms a bridge to the 30S subunit in the 70S ribosome.

Functionally, this is one of the proteins that bind and probably mediate the attachment of the 5S RNA into the large ribosomal subunit, where it forms part of the central protuberance. In the 70S ribosome it contacts protein S13 of the 30S subunit (bridge B1b), connecting the 2 subunits; this bridge is implicated in subunit movement. Contacts the P site tRNA; the 5S rRNA and some of its associated proteins might help stabilize positioning of ribosome-bound tRNAs. The polypeptide is Large ribosomal subunit protein uL5 (Salmonella agona (strain SL483)).